A 149-amino-acid chain; its full sequence is Hordoindoline-A (149 aa).

Residues 1-19 (MKALFLMGLLALVASAAFA) form the signal peptide. A propeptide spanning residues 20 to 28 (QYGEVVGSY) is cleaved from the precursor. A propeptide spans 148–149 (YW) (removed in mature form).

In terms of processing, five disulfide bonds are present. As to expression, found in endosperm and aleurone layer of developing kernels, but not in the embryo.

The protein localises to the membrane. The protein resides in the secreted. It is found in the extracellular space. In terms of biological role, acts as a membranotoxin, probably through its antibacterial and antifungal activities, contributing to the defense mechanism of the plant against predators. Forms monovalent cation-selective ion channels in membranes. Contributes to grain texture and hardness. In Hordeum vulgare (Barley), this protein is Hordoindoline-A (HINA).